Here is a 100-residue protein sequence, read N- to C-terminus: Small ribosomal subunit protein uS14c (100 aa).

Belongs to the universal ribosomal protein uS14 family. Component of the chloroplast small ribosomal subunit (SSU). Mature 70S chloroplast ribosomes of higher plants consist of a small (30S) and a large (50S) subunit. The 30S small subunit contains 1 molecule of ribosomal RNA (16S rRNA) and 24 different proteins. The 50S large subunit contains 3 rRNA molecules (23S, 5S and 4.5S rRNA) and 33 different proteins.

Its subcellular location is the plastid. The protein localises to the chloroplast. Functionally, component of the chloroplast ribosome (chloro-ribosome), a dedicated translation machinery responsible for the synthesis of chloroplast genome-encoded proteins, including proteins of the transcription and translation machinery and components of the photosynthetic apparatus. In Spinacia oleracea (Spinach), this protein is Small ribosomal subunit protein uS14c.